Consider the following 242-residue polypeptide: Biosynthetic peptidoglycan transglycosylase (242 aa).

A helical membrane pass occupies residues 19-39 (ILAALAVFWGGGIALFSVVPV).

This sequence belongs to the glycosyltransferase 51 family.

The protein resides in the cell inner membrane. It carries out the reaction [GlcNAc-(1-&gt;4)-Mur2Ac(oyl-L-Ala-gamma-D-Glu-L-Lys-D-Ala-D-Ala)](n)-di-trans,octa-cis-undecaprenyl diphosphate + beta-D-GlcNAc-(1-&gt;4)-Mur2Ac(oyl-L-Ala-gamma-D-Glu-L-Lys-D-Ala-D-Ala)-di-trans,octa-cis-undecaprenyl diphosphate = [GlcNAc-(1-&gt;4)-Mur2Ac(oyl-L-Ala-gamma-D-Glu-L-Lys-D-Ala-D-Ala)](n+1)-di-trans,octa-cis-undecaprenyl diphosphate + di-trans,octa-cis-undecaprenyl diphosphate + H(+). It participates in cell wall biogenesis; peptidoglycan biosynthesis. In terms of biological role, peptidoglycan polymerase that catalyzes glycan chain elongation from lipid-linked precursors. In Salmonella typhi, this protein is Biosynthetic peptidoglycan transglycosylase.